Reading from the N-terminus, the 100-residue chain is Urease subunit gamma (100 aa).

This sequence belongs to the urease gamma subunit family. Heterotrimer of UreA (gamma), UreB (beta) and UreC (alpha) subunits. Three heterotrimers associate to form the active enzyme.

Its subcellular location is the cytoplasm. The catalysed reaction is urea + 2 H2O + H(+) = hydrogencarbonate + 2 NH4(+). The protein operates within nitrogen metabolism; urea degradation; CO(2) and NH(3) from urea (urease route): step 1/1. This chain is Urease subunit gamma, found in Photorhabdus laumondii subsp. laumondii (strain DSM 15139 / CIP 105565 / TT01) (Photorhabdus luminescens subsp. laumondii).